Consider the following 875-residue polypeptide: Alanine--tRNA ligase (875 aa).

Zn(2+) is bound by residues His564, His568, Cys666, and His670.

The protein belongs to the class-II aminoacyl-tRNA synthetase family. Homotetramer. The cofactor is Zn(2+).

It localises to the cytoplasm. The enzyme catalyses tRNA(Ala) + L-alanine + ATP = L-alanyl-tRNA(Ala) + AMP + diphosphate. In terms of biological role, catalyzes the attachment of alanine to tRNA(Ala) in a two-step reaction: alanine is first activated by ATP to form Ala-AMP and then transferred to the acceptor end of tRNA(Ala). Also edits incorrectly charged Ser-tRNA(Ala) and Gly-tRNA(Ala) via its editing domain. The protein is Alanine--tRNA ligase of Serratia proteamaculans (strain 568).